A 670-amino-acid chain; its full sequence is Solute carrier organic anion transporter family member 1A1 (670 aa).

Over 1 to 20 the chain is Cytoplasmic; that stretch reads MEETEKKIATQEGRLFSKMK. A helical membrane pass occupies residues 21–40; that stretch reads VFLLSLTCACLTKSLSGVYM. Over 41–59 the chain is Extracellular; it reads NSMLTQIERQFDISTSVAG. Residues 60–80 traverse the membrane as a helical segment; it reads LINGSFEIGNLFFIVFVSYFG. At 81 to 86 the chain is on the cytoplasmic side; sequence TKLHRP. A helical membrane pass occupies residues 87-111; the sequence is VVIGIGCVIMGLGCLLMSLPHFFMG. Residues 112-155 lie on the Extracellular side of the membrane; that stretch reads RYEYETTISPTGNLSSNSFLCMENRTQTLKPTQDPAECVKEMKS. N-linked (GlcNAc...) asparagine glycosylation is found at asparagine 124 and asparagine 135. Residues 156–184 traverse the membrane as a helical segment; the sequence is LMWICVMVGNIIRGIGETPIVPLGISYIE. The Cytoplasmic segment spans residues 185-203; the sequence is DFAKSENSPLYIGILEMGK. Residues 204 to 224 traverse the membrane as a helical segment; that stretch reads VAGPIFGLLLGSYCAQIYVDI. At 225–242 the chain is on the extracellular side; sequence GSVNTDDLTITPSDTRWV. A helical transmembrane segment spans residues 243–267; that stretch reads GAWWIGFLVCAGVNILTSIPFFFLP. At 268-311 the chain is on the cytoplasmic side; the sequence is KALPKKGQQENVAVTKDGKVEKYGGQAREENLGITKDFLTFMKR. A helical membrane pass occupies residues 312-333; it reads LFCNPIYMLFILTSVLQVNGFI. At 334–353 the chain is on the extracellular side; sequence NKFTFLPKYLEQQYGKSTAE. The helical transmembrane segment at 354–377 threads the bilayer; it reads AIFLIGVYSLPPICLGYLIGGFIM. The Cytoplasmic segment spans residues 378–381; sequence KKFK. The chain crosses the membrane as a helical span at residues 382–405; it reads ITVKKAAYLAFCLSVFEYLLFLCH. The Extracellular portion of the chain corresponds to 406-513; it reads FMLTCDNAAV…PECANRLQYF (108 aa). Residues 433–488 enclose the Kazal-like domain; that stretch reads SKVLADCNTRCSCSTNTWDPVCGDNGVAYMSACLAGCKKFVGTGTNMVFQDCSCIQ. Cystine bridges form between cysteine 439–cysteine 469, cysteine 445–cysteine 465, and cysteine 454–cysteine 486. The N-linked (GlcNAc...) asparagine glycan is linked to asparagine 492. The chain crosses the membrane as a helical span at residues 514–536; that stretch reads LILTIIISFIYSLTAIPGYMVFL. The Cytoplasmic segment spans residues 537–545; sequence RCVKSEEKS. The chain crosses the membrane as a helical span at residues 546-571; the sequence is LGVGLHTFCIRVFAGIPAPVYFGALI. The Extracellular segment spans residues 572–605; it reads DRTCLHWGTLKCGQRGACRMYDINSFRHIYLGLP. Residues 606 to 623 form a helical membrane-spanning segment; it reads IALRGSSYLPAFFILILM. Topologically, residues 624–670 are cytoplasmic; it reads RKFQFPGDIDSSATDHTEMMLGEKESEHTDVHGSPQVENDGELKTKL. 2 positions are modified to phosphoserine: serine 634 and serine 635. Positions 645 to 654 are enriched in basic and acidic residues; that stretch reads GEKESEHTDV. The tract at residues 645–670 is disordered; it reads GEKESEHTDVHGSPQVENDGELKTKL.

The protein belongs to the organo anion transporter (TC 2.A.60) family. In terms of assembly, binds to PDZK1. Interaction with PDZK1 is required for expression on hepatocyte surface. Glycosylated. As to expression, highly expressed in liver and kidney, and at lower levels in brain, lung, skeletal muscle and proximal colon.

It is found in the basolateral cell membrane. It carries out the reaction estrone 3-sulfate(out) + hydrogencarbonate(in) = estrone 3-sulfate(in) + hydrogencarbonate(out). The enzyme catalyses taurocholate(out) + hydrogencarbonate(in) = taurocholate(in) + hydrogencarbonate(out). The catalysed reaction is L-thyroxine(out) = L-thyroxine(in). It catalyses the reaction prostaglandin E2(out) = prostaglandin E2(in). It carries out the reaction 17beta-estradiol 17-O-(beta-D-glucuronate)(out) = 17beta-estradiol 17-O-(beta-D-glucuronate)(in). The enzyme catalyses dehydroepiandrosterone 3-sulfate(out) = dehydroepiandrosterone 3-sulfate(in). Mediates the Na(+)-independent transport of organic anions such as steroid sulfate conjugates (dehydroepiandrosterone sulfate (DHEAS), 17-beta-glucuronosyl estradiol, estrone-3-sulfate), conjugated (taurocholate) and unconjugated (cholate) bile acids, prostaglandin E2 (PGE2) and L-thyroxine T4. Also capable of transporting sulfobromophthalein (BSP), ouabain and gadoxetate. Hydrogencarbonate/HCO3(-) acts as the probable counteranion that exchanges for organic anions. Shows a pH-sensitive substrate specificity which may be ascribed to the protonation state of the binding site and leads to a stimulation of substrate transport in an acidic microenvironment. This Rattus norvegicus (Rat) protein is Solute carrier organic anion transporter family member 1A1.